A 277-amino-acid chain; its full sequence is MKQYLELMRHVRDNGVRKEDRTGTGTVSVFGYQMRFDLSQGFPLVTTKKCHLKSIIHELLWFLNGETNIAYLNNNGVKIWDAWATESGDLGPIYGAQWRSWPAQNGETLDQISQLIEQIKHKPDSRRLIISAWNPALLPDESISPQDNVRNGKMALPPCHTLFQFYVLEGRLSCQLYQRSADIFLGVPFNIASYALLTMMIAQVTGLAPGDFVHTFGDAHLYLNHLEQVDTQLQRQPLPLPTMAINPAVKDIFGFCFDDFELQNYQAHPHIAAPISV.

Arg21 contributes to the dUMP binding site. His51 contributes to the (6R)-5,10-methylene-5,6,7,8-tetrahydrofolate binding site. Residue 126 to 127 (RR) coordinates dUMP. The active-site Nucleophile is the Cys159. Residues 179–182 (RSAD), Asn190, and 220–222 (HLY) each bind dUMP. Asp182 serves as a coordination point for (6R)-5,10-methylene-5,6,7,8-tetrahydrofolate. Ser276 serves as a coordination point for (6R)-5,10-methylene-5,6,7,8-tetrahydrofolate.

This sequence belongs to the thymidylate synthase family. Bacterial-type ThyA subfamily. Homodimer.

The protein localises to the cytoplasm. The enzyme catalyses dUMP + (6R)-5,10-methylene-5,6,7,8-tetrahydrofolate = 7,8-dihydrofolate + dTMP. Its pathway is pyrimidine metabolism; dTTP biosynthesis. In terms of biological role, catalyzes the reductive methylation of 2'-deoxyuridine-5'-monophosphate (dUMP) to 2'-deoxythymidine-5'-monophosphate (dTMP) while utilizing 5,10-methylenetetrahydrofolate (mTHF) as the methyl donor and reductant in the reaction, yielding dihydrofolate (DHF) as a by-product. This enzymatic reaction provides an intracellular de novo source of dTMP, an essential precursor for DNA biosynthesis. The polypeptide is Thymidylate synthase (Teredinibacter turnerae (strain ATCC 39867 / T7901)).